Here is a 525-residue protein sequence, read N- to C-terminus: Tubulin-specific chaperone E (525 aa).

In terms of domain architecture, CAP-Gly spans 33-77 (GKVDGFEGNWYGIEWDDPKRGKHQGTVKGKQYFKCINKGSGSFMK). 3 LRR repeats span residues 300 to 321 (TLKS…LSSL), 326 to 347 (QLTE…GDVD), and 362 to 383 (NLKR…DKLD). Residues 414–444 (ENEIENDIENNNNNIKKDNNNNNKNNKNNKN) are disordered. A compositionally biased stretch (low complexity) spans 422–444 (ENNNNNIKKDNNNNNKNNKNNKN). The LRRCT domain occupies 441 to 481 (NNKNNKTIFLNRLNIIPRLSNLKKLNLSDITLLERKDAELY).

The protein belongs to the TBCE family. In terms of assembly, supercomplex made of cofactors A to E. Cofactors A and D function by capturing and stabilizing tubulin in a quasi-native conformation. Cofactor E binds to the cofactor D-tubulin complex; interaction with cofactor C then causes the release of tubulin polypeptides that are committed to the native state.

The protein localises to the cytoplasm. The protein resides in the cytoskeleton. Tubulin-folding protein; involved in the second step of the tubulin folding pathway. This chain is Tubulin-specific chaperone E (tbce), found in Dictyostelium discoideum (Social amoeba).